Consider the following 485-residue polypeptide: NADH-quinone oxidoreductase subunit N (485 aa).

The next 14 helical transmembrane spans lie at 8–28 (LIAL…MLSI), 35–55 (FLNA…LWFV), 71–91 (GFAM…CTFA), 105–125 (FYLL…ANHL), 127–147 (TLFL…GYAF), 159–179 (YTIL…LVYA), 203–223 (LLAG…LVPF), 235–255 (PAPV…GVVM), 271–291 (VVLG…ALSQ), 297–317 (LLGY…IALQ), 326–346 (VGVY…VVSL), 373–393 (AAVM…LGFI), 408–430 (WWLV…RVAV), and 455–475 (IVVL…QPLI).

It belongs to the complex I subunit 2 family. As to quaternary structure, NDH-1 is composed of 13 different subunits. Subunits NuoA, H, J, K, L, M, N constitute the membrane sector of the complex.

It is found in the cell inner membrane. The catalysed reaction is a quinone + NADH + 5 H(+)(in) = a quinol + NAD(+) + 4 H(+)(out). Functionally, NDH-1 shuttles electrons from NADH, via FMN and iron-sulfur (Fe-S) centers, to quinones in the respiratory chain. The immediate electron acceptor for the enzyme in this species is believed to be ubiquinone. Couples the redox reaction to proton translocation (for every two electrons transferred, four hydrogen ions are translocated across the cytoplasmic membrane), and thus conserves the redox energy in a proton gradient. This Salmonella paratyphi A (strain ATCC 9150 / SARB42) protein is NADH-quinone oxidoreductase subunit N.